The chain runs to 158 residues: Cyclic pyranopterin monophosphate synthase (158 aa).

Substrate contacts are provided by residues 75-77 (LCH) and 113-114 (ME). The active site involves aspartate 128.

Belongs to the MoaC family. As to quaternary structure, homohexamer; trimer of dimers.

It carries out the reaction (8S)-3',8-cyclo-7,8-dihydroguanosine 5'-triphosphate = cyclic pyranopterin phosphate + diphosphate. Its pathway is cofactor biosynthesis; molybdopterin biosynthesis. Its function is as follows. Catalyzes the conversion of (8S)-3',8-cyclo-7,8-dihydroguanosine 5'-triphosphate to cyclic pyranopterin monophosphate (cPMP). This Actinobacillus succinogenes (strain ATCC 55618 / DSM 22257 / CCUG 43843 / 130Z) protein is Cyclic pyranopterin monophosphate synthase.